The following is a 418-amino-acid chain: Gamma-glutamyl phosphate reductase (418 aa).

Belongs to the gamma-glutamyl phosphate reductase family.

It localises to the cytoplasm. The catalysed reaction is L-glutamate 5-semialdehyde + phosphate + NADP(+) = L-glutamyl 5-phosphate + NADPH + H(+). Its pathway is amino-acid biosynthesis; L-proline biosynthesis; L-glutamate 5-semialdehyde from L-glutamate: step 2/2. In terms of biological role, catalyzes the NADPH-dependent reduction of L-glutamate 5-phosphate into L-glutamate 5-semialdehyde and phosphate. The product spontaneously undergoes cyclization to form 1-pyrroline-5-carboxylate. The chain is Gamma-glutamyl phosphate reductase from Halothermothrix orenii (strain H 168 / OCM 544 / DSM 9562).